A 610-amino-acid chain; its full sequence is Elongation factor 4 (610 aa).

Residues 12–194 (EKIRNFSIIA…QIVEKVPAPQ (183 aa)) form the tr-type G domain. GTP contacts are provided by residues 24 to 29 (DHGKST) and 141 to 144 (NKID).

This sequence belongs to the TRAFAC class translation factor GTPase superfamily. Classic translation factor GTPase family. LepA subfamily.

Its subcellular location is the cell membrane. The catalysed reaction is GTP + H2O = GDP + phosphate + H(+). Required for accurate and efficient protein synthesis under certain stress conditions. May act as a fidelity factor of the translation reaction, by catalyzing a one-codon backward translocation of tRNAs on improperly translocated ribosomes. Back-translocation proceeds from a post-translocation (POST) complex to a pre-translocation (PRE) complex, thus giving elongation factor G a second chance to translocate the tRNAs correctly. Binds to ribosomes in a GTP-dependent manner. The sequence is that of Elongation factor 4 from Streptococcus thermophilus (strain CNRZ 1066).